The following is a 562-amino-acid chain: Phosphoglucomutase-1 (562 aa).

The residue at position 1 (methionine 1) is an N-acetylmethionine. Lysine 16 is modified (N6-acetyllysine). Residue arginine 23 coordinates alpha-D-glucose 1,6-bisphosphate. Threonine 115 bears the Phosphothreonine mark. Serine 117 is a binding site for alpha-D-glucose 1,6-bisphosphate. Serine 117 acts as the Phosphoserine intermediate in catalysis. Serine 117 lines the Mg(2+) pocket. Serine 117 and serine 134 each carry phosphoserine. Threonine 185 is subject to Phosphothreonine. 3 positions are modified to phosphoserine: serine 201, serine 206, and serine 213. Residues aspartate 288, aspartate 290, and aspartate 292 each contribute to the Mg(2+) site. Alpha-D-glucose 1,6-bisphosphate-binding residues include aspartate 292 and arginine 293. Lysine 349 carries the post-translational modification N6-acetyllysine. Tyrosine 353 is subject to Phosphotyrosine. Residue threonine 357 coordinates alpha-D-glucose 1,6-bisphosphate. Residue serine 369 is modified to Phosphoserine. The alpha-D-glucose 1,6-bisphosphate site is built by glutamate 376, serine 378, and lysine 389. Position 378 is a phosphoserine (serine 378). Residue lysine 419 is modified to N6-succinyllysine. The residue at position 467 (threonine 467) is a Phosphothreonine; by PAK1. A phosphoserine mark is found at serine 477, serine 485, and serine 505. The residue at position 507 (threonine 507) is a Phosphothreonine. Serine 509 and serine 541 each carry phosphoserine.

The protein belongs to the phosphohexose mutase family. Monomer. It depends on Mg(2+) as a cofactor. Phosphorylation at Thr-467 by PAK1 significantly enhances enzymatic activity.

The protein resides in the cytoplasm. It catalyses the reaction alpha-D-glucose 1-phosphate = alpha-D-glucose 6-phosphate. It carries out the reaction O-phospho-L-seryl-[protein] + alpha-D-glucose 1-phosphate = alpha-D-glucose 1,6-bisphosphate + L-seryl-[protein]. The catalysed reaction is alpha-D-glucose 1,6-bisphosphate + L-seryl-[protein] = O-phospho-L-seryl-[protein] + alpha-D-glucose 6-phosphate. Its activity is regulated as follows. Glucose-1,6-bisphosphate enhances phosphorylation of the active site Ser-117, and thereby increases enzyme activity. Catalyzes the reversible isomerization of alpha-D-glucose 1-phosphate to alpha-D-glucose 6-phosphate. The mechanism proceeds via the intermediate compound alpha-D-glucose 1,6-bisphosphate. This enzyme participates in both the breakdown and synthesis of glucose. This chain is Phosphoglucomutase-1 (PGM1), found in Homo sapiens (Human).